The following is a 104-amino-acid chain: Ribonuclease P protein component 4 (104 aa).

Zn(2+) contacts are provided by Cys63, Cys66, Cys89, and Cys92.

This sequence belongs to the eukaryotic/archaeal RNase P protein component 4 family. Consists of a catalytic RNA component and at least 4-5 protein subunits. Zn(2+) is required as a cofactor.

It is found in the cytoplasm. The enzyme catalyses Endonucleolytic cleavage of RNA, removing 5'-extranucleotides from tRNA precursor.. In terms of biological role, part of ribonuclease P, a protein complex that generates mature tRNA molecules by cleaving their 5'-ends. The protein is Ribonuclease P protein component 4 of Methanosphaera stadtmanae (strain ATCC 43021 / DSM 3091 / JCM 11832 / MCB-3).